Consider the following 284-residue polypeptide: MEMO1 family protein M1425_2054 (284 aa).

It belongs to the MEMO1 family.

This Saccharolobus islandicus (strain M.14.25 / Kamchatka #1) (Sulfolobus islandicus) protein is MEMO1 family protein M1425_2054.